The following is a 251-amino-acid chain: Auxin-responsive protein IAA29 (251 aa).

The EAR-like (transcriptional repression) motif lies at 3–7; sequence LDLGL. In terms of domain architecture, PB1 spans 159–246; sequence SMYVKVKMDG…SIIRDRPCAY (88 aa).

This sequence belongs to the Aux/IAA family. In terms of assembly, homodimers and heterodimers.

It is found in the nucleus. Aux/IAA proteins are short-lived transcriptional factors that function as repressors of early auxin response genes at low auxin concentrations. Repression is thought to result from the interaction with auxin response factors (ARFs), proteins that bind to the auxin-responsive promoter element (AuxRE). Formation of heterodimers with ARF proteins may alter their ability to modulate early auxin response genes expression. In Arabidopsis thaliana (Mouse-ear cress), this protein is Auxin-responsive protein IAA29 (IAA29).